A 232-amino-acid chain; its full sequence is Polycomb group RING finger protein 5-B (232 aa).

Residues 18–57 (CFVCKGYLIKPTTVTECLHTFCKSCIVQHFEDSNDCPKCG) form an RING-type zinc finger. Basic and acidic residues predominate over residues 93 to 104 (QEDEFWRRKESN). The segment at 93–128 (QEDEFWRRKESNDENGPMCKKRRVDEEDDDKGDGDY) is disordered.

In terms of assembly, component of a PRC1-like complex.

Its subcellular location is the nucleus. Functionally, component of Polycomb group (PcG) multiprotein complexes; the complex class is required to maintain the transcriptionally repressive state of some genes. In Danio rerio (Zebrafish), this protein is Polycomb group RING finger protein 5-B (pcgf5b).